A 234-amino-acid polypeptide reads, in one-letter code: MATLFTATVPSHHRFVSPSQHPKQSLLSQSLSVTFTENPQPTAVVTLQEQQLTDWITSPVTRRFGIGAGFTWAGFLAFGVVSEQMKKSRLDVFQEEDNTRGLEKQEEIILPNGIRYYDLQVGSGATPSSGYLVVFDVKGQVHGTEQVFVDTFGGKGKSLAMVMDSRPYSKGLCQGIEHVLRSMKAGGKRRVIIPPSLGFGDRNVEFGQGLEIPPSATLDYIIEVDTVYCFQTIV.

The transit peptide at 1 to 28 (MATLFTATVPSHHRFVSPSQHPKQSLLS) directs the protein to the chloroplast. The PPIase FKBP-type domain maps to 130 to 228 (GYLVVFDVKG…DYIIEVDTVY (99 aa)).

The protein belongs to the FKBP-type PPIase family.

It localises to the plastid. The protein resides in the chloroplast thylakoid lumen. It catalyses the reaction [protein]-peptidylproline (omega=180) = [protein]-peptidylproline (omega=0). In terms of biological role, PPIases accelerate the folding of proteins. It catalyzes the cis-trans isomerization of proline imidic peptide bonds in oligopeptides. The chain is Peptidyl-prolyl cis-trans isomerase FKBP17-3, chloroplastic (FKBP17-3) from Arabidopsis thaliana (Mouse-ear cress).